The following is a 315-amino-acid chain: Acetyl-coenzyme A carboxylase carboxyl transferase subunit beta, chloroplastic (315 aa).

The CoA carboxyltransferase N-terminal domain maps to 47–315 (LWTRCDSCEN…VYKESNSYLF (269 aa)). Cysteine 51, cysteine 54, cysteine 70, and cysteine 73 together coordinate Zn(2+). The C4-type zinc finger occupies 51 to 73 (CDSCENMLYVRFLKQNKRICEEC).

Belongs to the AccD/PCCB family. In terms of assembly, acetyl-CoA carboxylase is a heterohexamer composed of biotin carboxyl carrier protein, biotin carboxylase and 2 subunits each of ACCase subunit alpha and ACCase plastid-coded subunit beta (accD). Zn(2+) is required as a cofactor.

The protein localises to the plastid. Its subcellular location is the chloroplast stroma. The enzyme catalyses N(6)-carboxybiotinyl-L-lysyl-[protein] + acetyl-CoA = N(6)-biotinyl-L-lysyl-[protein] + malonyl-CoA. The protein operates within lipid metabolism; malonyl-CoA biosynthesis; malonyl-CoA from acetyl-CoA: step 1/1. Component of the acetyl coenzyme A carboxylase (ACC) complex. Biotin carboxylase (BC) catalyzes the carboxylation of biotin on its carrier protein (BCCP) and then the CO(2) group is transferred by the transcarboxylase to acetyl-CoA to form malonyl-CoA. This is Acetyl-coenzyme A carboxylase carboxyl transferase subunit beta, chloroplastic from Physcomitrium patens (Spreading-leaved earth moss).